The sequence spans 241 residues: tRNA (guanine-N(7)-)-methyltransferase (241 aa).

The segment at 1–20 (MTESNDTPIQPEAGDERQHR) is disordered. Residues Glu71, Glu96, Asp123, and Asp146 each contribute to the S-adenosyl-L-methionine site. The active site involves Asp146. Substrate is bound by residues Lys150, Asp182, and 219 to 222 (TKFE).

This sequence belongs to the class I-like SAM-binding methyltransferase superfamily. TrmB family.

It carries out the reaction guanosine(46) in tRNA + S-adenosyl-L-methionine = N(7)-methylguanosine(46) in tRNA + S-adenosyl-L-homocysteine. The protein operates within tRNA modification; N(7)-methylguanine-tRNA biosynthesis. Functionally, catalyzes the formation of N(7)-methylguanine at position 46 (m7G46) in tRNA. This chain is tRNA (guanine-N(7)-)-methyltransferase, found in Pseudomonas fluorescens (strain ATCC BAA-477 / NRRL B-23932 / Pf-5).